A 200-amino-acid chain; its full sequence is Glycerol-3-phosphate acyltransferase (200 aa).

The next 5 membrane-spanning stretches (helical) occupy residues 6 to 26 (LTLG…AVLV), 56 to 76 (SAAM…YIAF), 82 to 102 (QVAL…PIFF), 118 to 138 (APIG…MVLI), and 141 to 161 (YSSL…WFLD).

Belongs to the PlsY family. In terms of assembly, probably interacts with PlsX.

Its subcellular location is the cell inner membrane. The catalysed reaction is an acyl phosphate + sn-glycerol 3-phosphate = a 1-acyl-sn-glycero-3-phosphate + phosphate. It participates in lipid metabolism; phospholipid metabolism. Catalyzes the transfer of an acyl group from acyl-phosphate (acyl-PO(4)) to glycerol-3-phosphate (G3P) to form lysophosphatidic acid (LPA). This enzyme utilizes acyl-phosphate as fatty acyl donor, but not acyl-CoA or acyl-ACP. This is Glycerol-3-phosphate acyltransferase from Shewanella sediminis (strain HAW-EB3).